The following is a 949-amino-acid chain: Glycine dehydrogenase (decarboxylating) (949 aa).

Lysine 699 bears the N6-(pyridoxal phosphate)lysine mark.

It belongs to the GcvP family. The glycine cleavage system is composed of four proteins: P, T, L and H. Pyridoxal 5'-phosphate serves as cofactor.

It catalyses the reaction N(6)-[(R)-lipoyl]-L-lysyl-[glycine-cleavage complex H protein] + glycine + H(+) = N(6)-[(R)-S(8)-aminomethyldihydrolipoyl]-L-lysyl-[glycine-cleavage complex H protein] + CO2. Functionally, the glycine cleavage system catalyzes the degradation of glycine. The P protein binds the alpha-amino group of glycine through its pyridoxal phosphate cofactor; CO(2) is released and the remaining methylamine moiety is then transferred to the lipoamide cofactor of the H protein. This is Glycine dehydrogenase (decarboxylating) from Roseobacter denitrificans (strain ATCC 33942 / OCh 114) (Erythrobacter sp. (strain OCh 114)).